Consider the following 453-residue polypeptide: Bifunctional protein GlmU (453 aa).

Residues Met1–Arg231 form a pyrophosphorylase region. UDP-N-acetyl-alpha-D-glucosamine is bound by residues Leu10–Gly13, Lys24, Gln77, Gly82–Thr83, Tyr105–Asp107, Gly143, Glu157, Asn172, and Asn229. Asp107 lines the Mg(2+) pocket. Asn229 lines the Mg(2+) pocket. The segment at Ala232–Ala252 is linker. The interval Gly253 to Ala453 is N-acetyltransferase. 2 residues coordinate UDP-N-acetyl-alpha-D-glucosamine: Arg318 and Lys336. The Proton acceptor role is filled by His348. The UDP-N-acetyl-alpha-D-glucosamine site is built by Tyr351 and Asn362. Residues Ala365, Asn371–Tyr372, Ser390, Ser408, and Arg425 each bind acetyl-CoA.

The protein in the N-terminal section; belongs to the N-acetylglucosamine-1-phosphate uridyltransferase family. This sequence in the C-terminal section; belongs to the transferase hexapeptide repeat family. As to quaternary structure, homotrimer. It depends on Mg(2+) as a cofactor.

It localises to the cytoplasm. It catalyses the reaction alpha-D-glucosamine 1-phosphate + acetyl-CoA = N-acetyl-alpha-D-glucosamine 1-phosphate + CoA + H(+). The catalysed reaction is N-acetyl-alpha-D-glucosamine 1-phosphate + UTP + H(+) = UDP-N-acetyl-alpha-D-glucosamine + diphosphate. The protein operates within nucleotide-sugar biosynthesis; UDP-N-acetyl-alpha-D-glucosamine biosynthesis; N-acetyl-alpha-D-glucosamine 1-phosphate from alpha-D-glucosamine 6-phosphate (route II): step 2/2. Its pathway is nucleotide-sugar biosynthesis; UDP-N-acetyl-alpha-D-glucosamine biosynthesis; UDP-N-acetyl-alpha-D-glucosamine from N-acetyl-alpha-D-glucosamine 1-phosphate: step 1/1. It participates in bacterial outer membrane biogenesis; LPS lipid A biosynthesis. Functionally, catalyzes the last two sequential reactions in the de novo biosynthetic pathway for UDP-N-acetylglucosamine (UDP-GlcNAc). The C-terminal domain catalyzes the transfer of acetyl group from acetyl coenzyme A to glucosamine-1-phosphate (GlcN-1-P) to produce N-acetylglucosamine-1-phosphate (GlcNAc-1-P), which is converted into UDP-GlcNAc by the transfer of uridine 5-monophosphate (from uridine 5-triphosphate), a reaction catalyzed by the N-terminal domain. The protein is Bifunctional protein GlmU of Rhizobium etli (strain ATCC 51251 / DSM 11541 / JCM 21823 / NBRC 15573 / CFN 42).